A 200-amino-acid chain; its full sequence is TATA-box-binding protein 2 (200 aa).

Tandem repeats lie at residues L25–I101 and I115–L192.

This sequence belongs to the TBP family. Belongs to the TFIID complex together with the TBP-associated factors (TAFs). Binds DNA as monomer.

The protein localises to the nucleus. Functionally, general transcription factor that functions at the core of the DNA-binding multiprotein factor TFIID. Binding of TFIID to the TATA box is the initial transcriptional step of the pre-initiation complex (PIC), playing a role in the activation of eukaryotic genes transcribed by RNA polymerase II. The protein is TATA-box-binding protein 2 (TBP2) of Zea mays (Maize).